We begin with the raw amino-acid sequence, 297 residues long: Haloalkane dehalogenase (297 aa).

The 102-residue stretch at 47-148 (PPIVLLHGEP…AIARLVVANG (102 aa)) folds into the AB hydrolase-1 domain. The active-site Nucleophile is aspartate 123. Aspartate 250 acts as the Proton donor in catalysis. Histidine 279 (proton acceptor) is an active-site residue.

Belongs to the haloalkane dehalogenase family. Type 1 subfamily. Monomer.

It carries out the reaction 1-haloalkane + H2O = a halide anion + a primary alcohol + H(+). Its function is as follows. Catalyzes hydrolytic cleavage of carbon-halogen bonds in halogenated aliphatic compounds, leading to the formation of the corresponding primary alcohols, halide ions and protons. The sequence is that of Haloalkane dehalogenase from Mycobacterium marinum (strain ATCC BAA-535 / M).